The sequence spans 931 residues: Protocadherin gamma-B2 (931 aa).

Positions 1–30 (MKASSGRCGLVRWLQVLLPFLLSLFPGALP) are cleaved as a signal peptide. Cadherin domains are found at residues 31–133 (VQIR…TPLF), 134–242 (KQTK…PPVF), 243–347 (SQDV…APEV), 348–452 (IVTS…APVF), 453–562 (QQTS…APRV), and 570–675 (DGSA…LPDL). Residues 31-691 (VQIRYSIPEE…SDPQAKLQFY (661 aa)) lie on the Extracellular side of the membrane. N-linked (GlcNAc...) asparagine glycosylation is found at Asn419 and Asn545. Residues 692–712 (LVVALALISVLFFLAVILAIS) form a helical membrane-spanning segment. Residues 713 to 931 (LRLRLSSRSD…KKKSGKKEKK (219 aa)) are Cytoplasmic-facing. 2 disordered regions span residues 814-840 (DWRF…WPNN) and 901-931 (ATLT…KEKK). The span at 815–840 (WRFSQAQRPGTSGSQNGDDTGTWPNN) shows a compositional bias: polar residues. The span at 921-931 (NKKKSGKKEKK) shows a compositional bias: basic residues.

The protein localises to the cell membrane. Potential calcium-dependent cell-adhesion protein. May be involved in the establishment and maintenance of specific neuronal connections in the brain. This is Protocadherin gamma-B2 (PCDHGB2) from Homo sapiens (Human).